Consider the following 637-residue polypeptide: Chaperone protein HtpG (637 aa).

Residues 1–345 (MSQQETHGFQ…SNDLPLNVSR (345 aa)) form an a; substrate-binding region. The tract at residues 346 to 562 (EILQDNHVTK…EGEMSTQMIK (217 aa)) is b. Residues 563-637 (LMQAAGQPVP…MNQMLLANMK (75 aa)) form a c region.

Belongs to the heat shock protein 90 family. In terms of assembly, homodimer.

It localises to the cytoplasm. Its function is as follows. Molecular chaperone. Has ATPase activity. This chain is Chaperone protein HtpG, found in Shewanella baltica (strain OS185).